The sequence spans 529 residues: Serine hydroxymethyltransferase 3, chloroplastic (529 aa).

The transit peptide at methionine 1–arginine 60 directs the protein to the chloroplast. An N6-(pyridoxal phosphate)lysine modification is found at lysine 314.

Belongs to the SHMT family. Homotetramer. The cofactor is pyridoxal 5'-phosphate.

The protein localises to the plastid. It localises to the chloroplast. It catalyses the reaction (6R)-5,10-methylene-5,6,7,8-tetrahydrofolate + glycine + H2O = (6S)-5,6,7,8-tetrahydrofolate + L-serine. It participates in one-carbon metabolism; tetrahydrofolate interconversion. Its activity is regulated as follows. Inhibited by 5-CH3-H4PteGlu1/5 and 5-HCO-H4PteGlu1/5 in vitro. Catalyzes the interconversion of serine and glycine and directs the hydroxymethyl moiety of serine into the metabolic network of H4PteGlu(n)-bound one-carbon units. This chain is Serine hydroxymethyltransferase 3, chloroplastic, found in Arabidopsis thaliana (Mouse-ear cress).